A 348-amino-acid chain; its full sequence is MQEKEMFDLTIIGGGPAGLYSTFYAGMRDLKVKLVEYNKELGGKILFYPEKIIWDVGGMPPTTGRTLINQLVEQATTFNPTICLNEHIVRMVREPDNTYTLFNEQGKAHYTRAVMLASGHGIPVMQKLEIEGADRYEVSNLHYTVTQMDIFANKRVLISGGGNAAVDWANELANISKEVVVCHRRDEFGGHEKNVEQMKSVTKIHTPYQIKELHGVGSAIEAVTLAHCDTGEQRQIEVDAVIVNHGMKLDGCFLIEAGLALEEDGFLRVSACMETSQPGIFAAGDVTRHEGKLQLISGAFVEGATAVNGVKQFLDPKADKQAYVSSHNEKFKKKNEQLKQEKQAQLMN.

Residues glutamate 36, lysine 44, tyrosine 48, isoleucine 88, proline 123, aspartate 285, and serine 326 each contribute to the FAD site. Positions 329 to 348 (EKFKKKNEQLKQEKQAQLMN) are disordered.

Belongs to the ferredoxin--NADP reductase type 2 family. In terms of assembly, homodimer. The cofactor is FAD.

The catalysed reaction is 2 reduced [2Fe-2S]-[ferredoxin] + NADP(+) + H(+) = 2 oxidized [2Fe-2S]-[ferredoxin] + NADPH. This chain is Ferredoxin--NADP reductase 1, found in Shouchella clausii (strain KSM-K16) (Alkalihalobacillus clausii).